A 678-amino-acid chain; its full sequence is MEELVGLREGSSGNPVALRELWSPCPRLRRGIRGGLEWLKQKLFRVGEDWYFLMTLGVLMALISYAMNFALGRVVRAHKWLYREIGDSHLLRYLSWTVYPVALVSFSSGFSQSITPFSGGSGIPELKTILSGVVLENYLDIKNFGAKVVGLSCTLATGSTLFLGKVGPFVHLSVMIAAYLGRVRTKTIGEAENKSKQNEMLVAGAAVGVATVFAAPFSGVLFCIEVMSSHFSVWDYWRGFFAATCGAFMFRLLAVFNSEQETITSLYKTSFPVDVPFDLPEIFFFVLLGAICGVASCAYLYCQRTFLAFTKTNKLISKLMATSKPLYAALAATVLASITYPPGVGRFMASRLSMREHLDTLFDNHSWALLTRNSSPPWPAEPDPQHLWWEWYHPRFTIFGTLAFFLVMKFWMLILATTIPMPAGYFLPIFIIGAAIGRLLGEALSVAFPEGIVAGGVINPIMPGGYALAGAAAFSGAVTHSISTALLAFELTGQIVHALPVLMAVLAANAIAQSCQPSFYDGTIMVKKLPYLPWIRGRPINSHRVIVEHFMRRAISTLARDAALEQVVKVLTSTDEAEYPLVESTESQLLVGIVQRAQLVQALQAEAPARASGQQRCLQDILAGGCPTEPVTLTLSPETSLHQAHNLFELLNLRSLYVTSKGRAVVYVSWVERQHTGF.

The Cytoplasmic segment spans residues 1 to 50 (MEELVGLREGSSGNPVALRELWSPCPRLRRGIRGGLEWLKQKLFRVGEDW). The next 2 helical transmembrane spans lie at 51–82 (YFLM…KWLY) and 91–111 (LRYL…SGFS). Residues 116–127 (PFSGGSGIPELK) constitute an intramembrane region (helical). Ser-121 serves as a coordination point for chloride. The next 2 membrane-spanning stretches (helical) occupy residues 141–160 (IKNF…TGST) and 161–180 (LFLG…AAYL). The helical intramembrane region spans 203-224 (AGAAVGVATVFAAPFSGVLFCI). Residues 236–255 (YWRGFFAATCGAFMFRLLAV) form a helical membrane-spanning segment. Ca(2+) is bound by residues Glu-259, Glu-261, Asp-278, and Glu-281. The next 2 helical transmembrane spans lie at 282–310 (IFFF…LAFT) and 325–342 (PLYA…TYPP). Residues 349-360 (ASRLSMREHLDT) constitute an intramembrane region (helical). A glycan (N-linked (GlcNAc...) asparagine) is linked at Asn-364. Helical transmembrane passes span 400–420 (GTLA…TTIP) and 421–440 (MPAG…GRLL). Residue Phe-426 participates in chloride binding. Positions 464 to 496 (GGYALAGAAAFSGAVTHSISTALLAFELTGQIV) form an intramembrane region, helical. A helical transmembrane segment spans residues 500-520 (PVLMAVLAANAIAQSCQPSFY). Residues 521–678 (DGTIMVKKLP…SWVERQHTGF (158 aa)) lie on the Cytoplasmic side of the membrane. CBS domains are found at residues 551-612 (MRRA…ARAS) and 620-678 (DILA…HTGF).

The protein belongs to the chloride channel (TC 2.A.49) family. CLCNKB subfamily. In terms of assembly, homodimer. Interacts with BSND. In terms of processing, N-glycosylated. Expressed predominantly in the kidney.

The protein localises to the basolateral cell membrane. The enzyme catalyses chloride(in) = chloride(out). It carries out the reaction iodide(out) = iodide(in). It catalyses the reaction nitrate(in) = nitrate(out). The catalysed reaction is bromide(in) = bromide(out). Anion-selective channel permeable to small monovalent anions with ion selectivity for chloride &gt; bromide &gt; nitrate &gt; iodide. Forms a homodimeric channel where each subunit has its own ion conduction pathway. May conduct double-barreled currents controlled by two types of gates, two fast gates that control each subunit independently and a slow common gate that opens and shuts off both subunits simultaneously. Assembles with the regulatory subunit BSND/Barttin for sorting at the basolateral plasma membrane domain and functional switch to the ion conducting state. CLCNKB:BSND channels display mostly a linear current-voltage relationship controlled by common gate. Mediates chloride conductance along nephron segments, namely the thick ascending limb of Henle's loop, convoluted tubule and the collecting duct, contributing to the maintenance of systemic acid-base and electrolyte homeostasis. Conducts chloride currents in the stria vascularis of the inner ear to establish the endocochlear potential necessary for normal hearing. This is Chloride channel protein ClC-Kb (CLCNKB) from Oryctolagus cuniculus (Rabbit).